A 286-amino-acid polypeptide reads, in one-letter code: Ribosomal RNA small subunit methyltransferase A (286 aa).

Positions 33, 35, 60, 81, 111, and 129 each coordinate S-adenosyl-L-methionine.

It belongs to the class I-like SAM-binding methyltransferase superfamily. rRNA adenine N(6)-methyltransferase family. RsmA subfamily.

It is found in the cytoplasm. The enzyme catalyses adenosine(1518)/adenosine(1519) in 16S rRNA + 4 S-adenosyl-L-methionine = N(6)-dimethyladenosine(1518)/N(6)-dimethyladenosine(1519) in 16S rRNA + 4 S-adenosyl-L-homocysteine + 4 H(+). Its function is as follows. Specifically dimethylates two adjacent adenosines (A1518 and A1519) in the loop of a conserved hairpin near the 3'-end of 16S rRNA in the 30S particle. May play a critical role in biogenesis of 30S subunits. In Streptomyces coelicolor (strain ATCC BAA-471 / A3(2) / M145), this protein is Ribosomal RNA small subunit methyltransferase A.